Here is a 201-residue protein sequence, read N- to C-terminus: Proteasome subunit beta 1 (201 aa).

Positions 1 to 10 are cleaved as a propeptide — removed in mature form; by autocatalysis; it reads MNGSPSAMKG. Residue T11 is the Nucleophile of the active site.

Belongs to the peptidase T1B family. As to quaternary structure, the 20S proteasome core is composed of 14 alpha and 14 beta subunits that assemble into four stacked heptameric rings, resulting in a barrel-shaped structure. The two inner rings, each composed of seven catalytic beta subunits, are sandwiched by two outer rings, each composed of seven alpha subunits. The catalytic chamber with the active sites is on the inside of the barrel. Has a gated structure, the ends of the cylinder being occluded by the N-termini of the alpha-subunits. Is capped at one or both ends by the proteasome regulatory ATPase, PAN.

It localises to the cytoplasm. The catalysed reaction is Cleavage of peptide bonds with very broad specificity.. With respect to regulation, the formation of the proteasomal ATPase PAN-20S proteasome complex, via the docking of the C-termini of PAN into the intersubunit pockets in the alpha-rings, triggers opening of the gate for substrate entry. Interconversion between the open-gate and close-gate conformations leads to a dynamic regulation of the 20S proteasome proteolysis activity. Functionally, component of the proteasome core, a large protease complex with broad specificity involved in protein degradation. In Thermococcus gammatolerans (strain DSM 15229 / JCM 11827 / EJ3), this protein is Proteasome subunit beta 1.